The following is a 383-amino-acid chain: Agmatine deiminase (383 aa).

Agmatine is bound by residues Asp-220 and Asp-226. The active-site Amidino-cysteine intermediate is Cys-366.

It belongs to the agmatine deiminase family. Forms homodimers.

It carries out the reaction agmatine + H2O = N-carbamoylputrescine + NH4(+). Its pathway is amine and polyamine biosynthesis; putrescine biosynthesis via agmatine pathway; N-carbamoylputrescine from agmatine: step 1/1. Inhibited by N-ethylmaleimide and iodoacetamide. Its function is as follows. Mediates the hydrolysis of agmatine into N-carbamoylputrescine in the arginine decarboxylase (ADC) pathway of putrescine biosynthesis, a basic polyamine. The protein is Agmatine deiminase (AIH) of Arabidopsis thaliana (Mouse-ear cress).